A 592-amino-acid polypeptide reads, in one-letter code: Cyclin-dependent kinase-like 3 (592 aa).

In terms of domain architecture, Protein kinase spans 4–286; it reads YETLGKVGEG…SSDLLHHEYF (283 aa). ATP is bound by residues 10-18 and K33; that span reads VGEGSYGTV. Positions 44 to 50 match the [NKR]KIAxRE motif; sequence NKIAMRE. The active-site Proton acceptor is the D125. T158 is modified (phosphothreonine). At Y160 the chain carries Phosphotyrosine. Over residues 368–379 the composition is skewed to basic and acidic residues; it reads GDISEPKKKEYE. Disordered stretches follow at residues 368–390 and 459–485; these read GDIS…ANEN and RAKK…PGPI. The span at 466-477 shows a compositional bias: polar residues; that stretch reads SSQSIGQVMPNS.

It belongs to the protein kinase superfamily. CMGC Ser/Thr protein kinase family. CDC2/CDKX subfamily.

The protein localises to the cytoplasm. It catalyses the reaction L-seryl-[protein] + ATP = O-phospho-L-seryl-[protein] + ADP + H(+). The enzyme catalyses L-threonyl-[protein] + ATP = O-phospho-L-threonyl-[protein] + ADP + H(+). The polypeptide is Cyclin-dependent kinase-like 3 (Homo sapiens (Human)).